The primary structure comprises 374 residues: MAAMMQKSAFTGSAVSSKSGVRAKAARAVVDVRAEKKIRVAINGFGRIGRNFLRCWHGRQNTLLDVVAINDSGGVKQASHLLKYDSTLGTFAADVKIVDDSHISVDGKQIKIVSSRDPLQLPWKEMNIDLVIEGTGVFIDKVGAGKHIQAGASKVLITAPAKDKDIPTFVVGVNEGDYKHEYPIISNASCTTNCLAPFVKVLEQKFGIVKGTMTTTHSYTGDQRLLDASHRDLRRARAAALNIVPTTTGAAKAVSLVLPSLKGKLNGIALRVPTPTVSVVDLVVQVEKKTFAEEVNAAFREAANGPMKGVLHVEDAPLVSIDFKCTDQSTSIDASLTMVMGDDMVKVVAWYDNEWGYSQRVVDLAEVTAKKWVA.

The transit peptide at 1–34 (MAAMMQKSAFTGSAVSSKSGVRAKAARAVVDVRA) directs the protein to the chloroplast. Residues 47–48 (RI), Asp-71, and Arg-116 contribute to the NADP(+) site. Cys-55 and Cys-325 are joined by a disulfide. Residues 189 to 191 (SCT), Thr-220, Arg-235, 248 to 249 (TG), and Arg-271 each bind D-glyceraldehyde 3-phosphate. Residue Cys-190 is the Nucleophile of the active site. An NADP(+)-binding site is contributed by Asn-353.

The protein belongs to the glyceraldehyde-3-phosphate dehydrogenase family. As to quaternary structure, homotetramer. Component of a complex that contains two dimers of PRK, two tetramers of GAPDH and CP12. CP12 associates with GAPDH, causing its conformation to change. This GAPDH/CP12 complex binds PRK to form a half-complex (one unit). This unit probably dimerizes due partially to interactions between the enzymes of each unit.

The protein localises to the plastid. It is found in the chloroplast. It catalyses the reaction D-glyceraldehyde 3-phosphate + phosphate + NADP(+) = (2R)-3-phospho-glyceroyl phosphate + NADPH + H(+). The protein operates within carbohydrate biosynthesis; Calvin cycle. The sequence is that of Glyceraldehyde-3-phosphate dehydrogenase A, chloroplastic (GAPA) from Chlamydomonas reinhardtii (Chlamydomonas smithii).